A 357-amino-acid polypeptide reads, in one-letter code: O-methyltransferase pgmB (357 aa).

Position 206 (aspartate 206) interacts with S-adenosyl-L-methionine. Catalysis depends on histidine 256, which acts as the Proton acceptor.

It belongs to the class I-like SAM-binding methyltransferase superfamily. Cation-independent O-methyltransferase family.

The protein operates within pigment biosynthesis. It functions in the pathway secondary metabolite biosynthesis. In terms of biological role, O-methyltransferase; part of the gene cluster that mediates the biosynthesis of pleosporalin A, ascomycone A, as well as a third cryptic naphthoquinone derived pigment, all responsible for the coloration of conidia. Specifically methylates position C-6 of the pgmA product 3-acetonyl-1,6,8-trihydroxy-2-naphthaldehyde to yield fusarubinaldehyde. The pathway begins with the biosynthesis of the cyclized heptaketide 3-acetonyl-1,6,8-trihydroxy-2-naphthaldehyde by the NR-PKS pgmA. The C-6 hydroxyl group is further methylated by the O-methyltransferase pgmB to yield fusarubinaldehyde which is in turn oxidized by the cytochrome P450 monooxygenase pgmC at C-9. The C-1 hydroxyl group is then methylated spontaneously. Although pgmE, pgmD and pgmH are essential for the production of pleosporalin A, it is not the case for the 2 other final products and it remains difficult to assign a specific function to each enzyme. PgmF and pgmG seem not to be involved in pigment biosynthesis although they were regulated by the cluster-specific transcription factor pgmR. In Aspergillus terreus (strain NIH 2624 / FGSC A1156), this protein is O-methyltransferase pgmB.